We begin with the raw amino-acid sequence, 398 residues long: Bombesin receptor subtype-3 (398 aa).

At 1–40 the chain is on the extracellular side; sequence MAQRQPHSPNQTLISITNDTESSSVVSNDNTNKGRSGDNS. N-linked (GlcNAc...) asparagine glycosylation is found at asparagine 10 and asparagine 18. The chain crosses the membrane as a helical span at residues 41–62; sequence PGIEALCAIYITYAVIISVGIL. The Cytoplasmic portion of the chain corresponds to 63-81; sequence GNAILIKVFFKTKSMQTVP. A helical membrane pass occupies residues 82 to 102; it reads NIFITSLAFGDLLLLLTCVPV. Over 103 to 120 the chain is Extracellular; the sequence is DATHYLAEGWLFGRIGCK. An intrachain disulfide couples cysteine 119 to cysteine 202. Residues 121–142 traverse the membrane as a helical segment; it reads VLSFIRLTSVGVSVFTLTILSA. Residues 143–162 lie on the Cytoplasmic side of the membrane; it reads DRYKAVVKPLERQPSNAILK. A helical transmembrane segment spans residues 163-183; the sequence is TCIKAGCVWIVSMIFALPEAI. Residues 184-219 are Extracellular-facing; that stretch reads FSNVYSFRDPNKNVTFESCTSYPVSKKLLQEIHSLL. A helical membrane pass occupies residues 220–240; that stretch reads CFLVFYIIPLSIISVYYSLIA. The Cytoplasmic portion of the chain corresponds to 241–271; it reads RTLYKSTLNIPTEEQGHARKQIESRKRIART. Residues 272 to 292 traverse the membrane as a helical segment; sequence VLVLVALFALCWLPNHLLYLY. The Extracellular portion of the chain corresponds to 293-312; it reads HSFTSQTYVDPSAMHFIFTI. The chain crosses the membrane as a helical span at residues 313–332; it reads FSRVLAFSNSCVNPFALYWL. The Cytoplasmic portion of the chain corresponds to 333–398; the sequence is SKTFQKHFKA…CSVKQAEDRV (66 aa). Cysteine 346 carries S-palmitoyl cysteine lipidation.

Belongs to the G-protein coupled receptor 1 family. As to quaternary structure, interacts with C6orf89.

The protein localises to the cell membrane. Role in sperm cell division, maturation, or function. This receptor mediates its action by association with G proteins that activate a phosphatidylinositol-calcium second messenger system. The protein is Bombesin receptor subtype-3 (BRS3) of Macaca mulatta (Rhesus macaque).